The chain runs to 167 residues: Small ribosomal subunit protein uS5 (167 aa).

The 64-residue stretch at 12 to 75 folds into the S5 DRBM domain; that stretch reads LQEKLIAVNR…EKARRNMVTV (64 aa).

This sequence belongs to the universal ribosomal protein uS5 family. In terms of assembly, part of the 30S ribosomal subunit. Contacts proteins S4 and S8.

Functionally, with S4 and S12 plays an important role in translational accuracy. In terms of biological role, located at the back of the 30S subunit body where it stabilizes the conformation of the head with respect to the body. In Shewanella oneidensis (strain ATCC 700550 / JCM 31522 / CIP 106686 / LMG 19005 / NCIMB 14063 / MR-1), this protein is Small ribosomal subunit protein uS5.